A 286-amino-acid chain; its full sequence is Beta-lactamase TEM (286 aa).

An N-terminal signal peptide occupies residues 1–23; the sequence is MSIQHFRVALIPFFAAFCLPVFA. Catalysis depends on Ser-68, which acts as the Acyl-ester intermediate. Cys-75 and Cys-121 are oxidised to a cystine. The active-site Proton acceptor is the Glu-166. A substrate-binding site is contributed by 232 to 234; it reads KSG.

Belongs to the class-A beta-lactamase family.

The enzyme catalyses a beta-lactam + H2O = a substituted beta-amino acid. Functionally, TEM-type are the most prevalent beta-lactamases in enterobacteria; they hydrolyze the beta-lactam bond in susceptible beta-lactam antibiotics, thus conferring resistance to penicillins and cephalosporins. TEM-3 and TEM-4 are capable of hydrolyzing cefotaxime and ceftazidime. TEM-5 is capable of hydrolyzing ceftazidime. TEM-6 is capable of hydrolyzing ceftazidime and aztreonam. TEM-8/CAZ-2, TEM-16/CAZ-7 and TEM-24/CAZ-6 are markedly active against ceftazidime. IRT-4 shows resistance to beta-lactamase inhibitors. In Escherichia coli, this protein is Beta-lactamase TEM (bla).